The chain runs to 290 residues: MFTKSVFIALVAGVLGVTAAYDPAHMPAKTDAKGGQTGYNDCQQRYGATNPKAKCQNIFINSVKDFCLWGPPKTNGADTVGDLEAVMVSYCMKSGYGTRLIPDGTIHGAHFLKTPSFVQITGTGDFTKIHIQAGDEGGELDPHGATGSGNPVGGQVFTRAYTGNWEQLPEWQNFMSATEYCFRACRSGPWDRQWCPHIYDVMGCLWNEPANYDRGVFEQCDGTEGEWPGVYSGSTWYQGVKPTPAAQPAGKSSNCRYYPSISNGPAIKTPSKRSVMATHVKRSPEWEEEP.

An N-terminal signal peptide occupies residues 1–19; the sequence is MFTKSVFIALVAGVLGVTA. The tract at residues 266-290 is disordered; that stretch reads AIKTPSKRSVMATHVKRSPEWEEEP.

The protein resides in the secreted. It is found in the nucleus. In terms of biological role, plays a role in the formation of the appressorium, a specialized infection structure with the purpose of penetrating the host surface, and is required for proper remodeling of the appressorium wall and vesicle secretion. This is Appressorium protein ROW2 from Mycosarcoma maydis (Corn smut fungus).